We begin with the raw amino-acid sequence, 129 residues long: Small ribosomal subunit protein uS11c (129 aa).

Belongs to the universal ribosomal protein uS11 family. Part of the 30S ribosomal subunit.

The protein resides in the plastid. Its subcellular location is the chloroplast. The polypeptide is Small ribosomal subunit protein uS11c (Oltmannsiellopsis viridis (Marine flagellate)).